Reading from the N-terminus, the 181-residue chain is Small ribosomal subunit protein uS4 (181 aa).

An S4 RNA-binding domain is found at 104 to 166 (RRLQTIVYKK…VTSSFKSRPP (63 aa)).

This sequence belongs to the universal ribosomal protein uS4 family. In terms of assembly, part of the 30S ribosomal subunit. Contacts protein S5. The interaction surface between S4 and S5 is involved in control of translational fidelity.

One of the primary rRNA binding proteins, it binds directly to 16S rRNA where it nucleates assembly of the body of the 30S subunit. In terms of biological role, with S5 and S12 plays an important role in translational accuracy. The sequence is that of Small ribosomal subunit protein uS4 from Saccharolobus islandicus (strain Y.N.15.51 / Yellowstone #2) (Sulfolobus islandicus).